The chain runs to 452 residues: MKVISNFQNKKILILGLAKSGEAAAKLLTKLGALVTVNDSKPFDQNPAAQALLEEGIKVICGSHPVELLDENFEYMVKNPGIPYDNPMVKRALAKEIPLLTEVELAYFVSEAPIIGITGSNGKTTTTTMIADVLNAGGQSALLSGNIGYPASKVVQKAIAGDTLVMELSSFQLVGVNAFRPHIAVITNLMPTHLDYHGSFEDYVAAKWMIQAQMTESDYLILNANQEISATLAKTTKATVIPFSTQKVVDGAYLNDGILYFKEQAIIAATDLGVPGSHNIENALATIAVAKLSGIADDIIAQCLSHFGGVKHRLQRVGQIKDITFYNDSKSTNILATQKALSGFDNSRLILIAGGLDRGNEFDDLVPDLLGLKQMIILGESAERMKRAANKAEVSYLEARNVAEATELAFKLAQTGDTILLSPANASWDMYPNFEVRGDEFLATFDCLRGDA.

Position 119–125 (119–125 (GSNGKTT)) interacts with ATP.

Belongs to the MurCDEF family.

It is found in the cytoplasm. The enzyme catalyses UDP-N-acetyl-alpha-D-muramoyl-L-alanine + D-glutamate + ATP = UDP-N-acetyl-alpha-D-muramoyl-L-alanyl-D-glutamate + ADP + phosphate + H(+). It participates in cell wall biogenesis; peptidoglycan biosynthesis. Its function is as follows. Cell wall formation. Catalyzes the addition of glutamate to the nucleotide precursor UDP-N-acetylmuramoyl-L-alanine (UMA). The chain is UDP-N-acetylmuramoylalanine--D-glutamate ligase from Streptococcus pyogenes serotype M5 (strain Manfredo).